The chain runs to 72 residues: GDDVKSACCDTCLCTKSNPPTCRCVDVGETCHSACLSCICAYSYPPKCQCFDTQKFCYRACHNSEKEEVIKG.

Intrachain disulfides connect cysteine 8–cysteine 61, cysteine 9–cysteine 24, cysteine 12–cysteine 57, cysteine 14–cysteine 22, cysteine 31–cysteine 38, cysteine 35–cysteine 50, and cysteine 40–cysteine 48.

As to quaternary structure, dimer.

Its function is as follows. Inhibits trypsin (IC(50)=0.9 nM) and alpha-chymotrypsin (IC(50)=1.1 nM). The chain is Bowman-Birk type proteinase inhibitor 2a from Lathyrus sativus (White vetchling).